The chain runs to 205 residues: Urease accessory protein UreG (205 aa).

Residue 12–19 (GPVGSGKT) participates in GTP binding.

It belongs to the SIMIBI class G3E GTPase family. UreG subfamily. Homodimer. UreD, UreF and UreG form a complex that acts as a GTP-hydrolysis-dependent molecular chaperone, activating the urease apoprotein by helping to assemble the nickel containing metallocenter of UreC. The UreE protein probably delivers the nickel.

It localises to the cytoplasm. In terms of biological role, facilitates the functional incorporation of the urease nickel metallocenter. This process requires GTP hydrolysis, probably effectuated by UreG. The sequence is that of Urease accessory protein UreG from Pseudomonas savastanoi pv. phaseolicola (strain 1448A / Race 6) (Pseudomonas syringae pv. phaseolicola (strain 1448A / Race 6)).